The chain runs to 511 residues: S-layer protein B (511 aa).

Residues 1–24 form the signal peptide; the sequence is MVKYMNLIVLGMLMFGVFVTLSLG. Residues 358–392 adopt a coiled-coil conformation; the sequence is IQRLQSEVSVLESEVDQLKVEIQSLNETLTLQASE. A helical transmembrane segment spans residues 487–507; it reads GGIILGVIALIIAIVAVVLVF.

It belongs to the Sulfolobales SlaB family. The mushroom-shaped unit cells of the Sulfolobales' S-layers may consist of three SlaB subunits and six SlaA subunits.

Its subcellular location is the secreted. The protein resides in the cell wall. It localises to the S-layer. The protein localises to the cell membrane. In terms of biological role, S-layer small protein. May anchor the complex to the cell membrane. This is S-layer protein B from Acidianus ambivalens (Desulfurolobus ambivalens).